The chain runs to 248 residues: Probable transcriptional regulatory protein BOV_1660 (248 aa).

It belongs to the TACO1 family.

Its subcellular location is the cytoplasm. The protein is Probable transcriptional regulatory protein BOV_1660 of Brucella ovis (strain ATCC 25840 / 63/290 / NCTC 10512).